Reading from the N-terminus, the 359-residue chain is UDP-3-O-acylglucosamine N-acyltransferase (359 aa).

His256 acts as the Proton acceptor in catalysis.

It belongs to the transferase hexapeptide repeat family. LpxD subfamily. Homotrimer.

The enzyme catalyses a UDP-3-O-[(3R)-3-hydroxyacyl]-alpha-D-glucosamine + a (3R)-hydroxyacyl-[ACP] = a UDP-2-N,3-O-bis[(3R)-3-hydroxyacyl]-alpha-D-glucosamine + holo-[ACP] + H(+). It functions in the pathway bacterial outer membrane biogenesis; LPS lipid A biosynthesis. Functionally, catalyzes the N-acylation of UDP-3-O-acylglucosamine using 3-hydroxyacyl-ACP as the acyl donor. Is involved in the biosynthesis of lipid A, a phosphorylated glycolipid that anchors the lipopolysaccharide to the outer membrane of the cell. In Rhodopseudomonas palustris (strain BisB5), this protein is UDP-3-O-acylglucosamine N-acyltransferase.